Reading from the N-terminus, the 264-residue chain is Myozenin-2 (264 aa).

Arg53 carries the post-translational modification Omega-N-methylarginine. Positions 90–135 are disordered; the sequence is GKVDGSNLEGGSQQAPLTPPNTPDPRSPPNPDNIAPGYSGPLKEIP. Ser101 bears the Phosphoserine mark. Residues 106-120 show a composition bias toward pro residues; that stretch reads LTPPNTPDPRSPPNP. 2 positions are modified to phosphothreonine: Thr107 and Thr111. At Ser116 the chain carries Phosphoserine.

It belongs to the myozenin family. Interacts via its C-terminus with spectrin repeats 3 and 4 of ACTN2. Interacts with ACTN1, LDB3, MYOT and PPP3CA.

Its subcellular location is the cytoplasm. The protein localises to the myofibril. The protein resides in the sarcomere. It is found in the z line. In terms of biological role, myozenins may serve as intracellular binding proteins involved in linking Z line proteins such as alpha-actinin, gamma-filamin, TCAP/telethonin, LDB3/ZASP and localizing calcineurin signaling to the sarcomere. Plays an important role in the modulation of calcineurin signaling. May play a role in myofibrillogenesis. This Pongo abelii (Sumatran orangutan) protein is Myozenin-2 (MYOZ2).